The sequence spans 470 residues: Tubulin gamma chain (470 aa).

144–150 (AGGTGSG) lines the GTP pocket.

The protein belongs to the tubulin family.

Its subcellular location is the cytoplasm. The protein localises to the cytoskeleton. The protein resides in the microtubule organizing center. It localises to the spindle pole body. Tubulin is the major constituent of microtubules. The gamma chain is found at microtubule organizing centers (MTOC) such as the spindle poles or the centrosome, suggesting that it is involved in the minus-end nucleation of microtubule assembly. The chain is Tubulin gamma chain (TUB4) from Eremothecium gossypii (strain ATCC 10895 / CBS 109.51 / FGSC 9923 / NRRL Y-1056) (Yeast).